The sequence spans 69 residues: Conotoxin Eb6.1 (69 aa).

The first 17 residues, V1–A17, serve as a signal peptide directing secretion. Positions E18–R41 are excised as a propeptide. 3 disulfides stabilise this stretch: C43–C57, C50–C61, and C56–C68.

The protein belongs to the conotoxin O1 superfamily. As to expression, expressed by the venom duct.

The protein localises to the secreted. The chain is Conotoxin Eb6.1 (E1) from Conus ebraeus (Hebrew cone).